Consider the following 220-residue polypeptide: Protein GrpE (220 aa).

It belongs to the GrpE family. Homodimer.

The protein resides in the cytoplasm. Participates actively in the response to hyperosmotic and heat shock by preventing the aggregation of stress-denatured proteins, in association with DnaK and GrpE. It is the nucleotide exchange factor for DnaK and may function as a thermosensor. Unfolded proteins bind initially to DnaJ; upon interaction with the DnaJ-bound protein, DnaK hydrolyzes its bound ATP, resulting in the formation of a stable complex. GrpE releases ADP from DnaK; ATP binding to DnaK triggers the release of the substrate protein, thus completing the reaction cycle. Several rounds of ATP-dependent interactions between DnaJ, DnaK and GrpE are required for fully efficient folding. This Bartonella quintana (strain Toulouse) (Rochalimaea quintana) protein is Protein GrpE.